Here is a 220-residue protein sequence, read N- to C-terminus: Deoxyribose-phosphate aldolase 1 (220 aa).

Asp89 functions as the Proton donor/acceptor in the catalytic mechanism. Lys151 serves as the catalytic Schiff-base intermediate with acetaldehyde. Lys180 acts as the Proton donor/acceptor in catalysis.

This sequence belongs to the DeoC/FbaB aldolase family. DeoC type 1 subfamily.

Its subcellular location is the cytoplasm. It carries out the reaction 2-deoxy-D-ribose 5-phosphate = D-glyceraldehyde 3-phosphate + acetaldehyde. It functions in the pathway carbohydrate degradation; 2-deoxy-D-ribose 1-phosphate degradation; D-glyceraldehyde 3-phosphate and acetaldehyde from 2-deoxy-alpha-D-ribose 1-phosphate: step 2/2. Its function is as follows. Catalyzes a reversible aldol reaction between acetaldehyde and D-glyceraldehyde 3-phosphate to generate 2-deoxy-D-ribose 5-phosphate. This is Deoxyribose-phosphate aldolase 1 from Staphylococcus aureus (strain bovine RF122 / ET3-1).